Reading from the N-terminus, the 317-residue chain is Aspartate carbamoyltransferase catalytic subunit (317 aa).

Arginine 65 and threonine 66 together coordinate carbamoyl phosphate. Lysine 93 lines the L-aspartate pocket. Arginine 115, histidine 145, and glutamine 148 together coordinate carbamoyl phosphate. L-aspartate contacts are provided by arginine 178 and arginine 233. 2 residues coordinate carbamoyl phosphate: glycine 274 and proline 275.

This sequence belongs to the aspartate/ornithine carbamoyltransferase superfamily. ATCase family. Heterododecamer (2C3:3R2) of six catalytic PyrB chains organized as two trimers (C3), and six regulatory PyrI chains organized as three dimers (R2).

The catalysed reaction is carbamoyl phosphate + L-aspartate = N-carbamoyl-L-aspartate + phosphate + H(+). The protein operates within pyrimidine metabolism; UMP biosynthesis via de novo pathway; (S)-dihydroorotate from bicarbonate: step 2/3. In terms of biological role, catalyzes the condensation of carbamoyl phosphate and aspartate to form carbamoyl aspartate and inorganic phosphate, the committed step in the de novo pyrimidine nucleotide biosynthesis pathway. The protein is Aspartate carbamoyltransferase catalytic subunit of Bordetella bronchiseptica (strain ATCC BAA-588 / NCTC 13252 / RB50) (Alcaligenes bronchisepticus).